Consider the following 199-residue polypeptide: MVKMLVLYYSAYGHMEQMAKAAAEGAREGGAEITLKRVPELVPEEVAKASHYKIDQEAPIATPGELADYDAIIIGTATRYGMMASQMKNFLDQTGGLWAKGALINKVGSVMVSTATQYGGAELALISTQWQMQHHGMIIVPLSYAYREQMGNDVVRGGAPYGMTTTADGDGSRQPSAQELDGARFQGRRVAEITAKLHG.

A Flavodoxin-like domain is found at 4 to 190 (MLVLYYSAYG…DGARFQGRRV (187 aa)). FMN is bound by residues 10–15 (SAYGHM) and 78–80 (TRY). Tyr12 lines the NAD(+) pocket. Trp98 serves as a coordination point for substrate. FMN is bound by residues 113–119 (STATQYG) and His134. The interval 162 to 181 (GMTTTADGDGSRQPSAQELD) is disordered. The span at 163–177 (MTTTADGDGSRQPSA) shows a compositional bias: polar residues.

It belongs to the WrbA family. FMN is required as a cofactor.

It catalyses the reaction a quinone + NADH + H(+) = a quinol + NAD(+). The enzyme catalyses a quinone + NADPH + H(+) = a quinol + NADP(+). The protein is NAD(P)H dehydrogenase (quinone) of Brucella suis (strain ATCC 23445 / NCTC 10510).